Reading from the N-terminus, the 533-residue chain is Beta-1,2-xylosyltransferase RCN11 (533 aa).

Residues 1–23 (MMPVRTYHHHHHHNNSNNHRLRR) are Cytoplasmic-facing. A helical; Signal-anchor for type II membrane protein transmembrane segment spans residues 24-44 (IIPRVLLAVFAIYAVSFAAYL). Over 45 to 533 (LRHQSPHPHP…LSNILKGFGC (489 aa)) the chain is Lumenal. Residues 51–78 (HPHPHPAADPERDAVDAAGGGGGGGAVD) are disordered. Basic and acidic residues predominate over residues 56–65 (PAADPERDAV). N-linked (GlcNAc...) asparagine glycans are attached at residues Asn-307 and Asn-313.

This sequence belongs to the glycosyltransferase 61 family. In terms of tissue distribution, expressed at the base of the crown roots and in the basal region of the shoot, which contains the shoot and axillary meristems.

It localises to the golgi apparatus membrane. It functions in the pathway glycan metabolism. In terms of biological role, glycosyltransferase involved in the xylosylation of N-glycans. Possesses beta-1,2-xylosyltransferase activity, transferring xylose from UDP-xylose to the core beta-linked mannose of N-glycans. Beta-1,2-linked xylose residues on N-glycans are critical for seed germination and plant development and growth under conditions of abiotic stress. This is Beta-1,2-xylosyltransferase RCN11 from Oryza sativa subsp. japonica (Rice).